The following is a 425-amino-acid chain: Serine--tRNA ligase (425 aa).

An L-serine-binding site is contributed by 231-233 (TAE). 262–264 (RSE) contributes to the ATP binding site. Glu285 is an L-serine binding site. Position 349 to 352 (349 to 352 (EISS)) interacts with ATP. Ser385 contributes to the L-serine binding site.

This sequence belongs to the class-II aminoacyl-tRNA synthetase family. Type-1 seryl-tRNA synthetase subfamily. Homodimer. The tRNA molecule binds across the dimer.

It is found in the cytoplasm. It carries out the reaction tRNA(Ser) + L-serine + ATP = L-seryl-tRNA(Ser) + AMP + diphosphate + H(+). The enzyme catalyses tRNA(Sec) + L-serine + ATP = L-seryl-tRNA(Sec) + AMP + diphosphate + H(+). The protein operates within aminoacyl-tRNA biosynthesis; selenocysteinyl-tRNA(Sec) biosynthesis; L-seryl-tRNA(Sec) from L-serine and tRNA(Sec): step 1/1. Its function is as follows. Catalyzes the attachment of serine to tRNA(Ser). Is also able to aminoacylate tRNA(Sec) with serine, to form the misacylated tRNA L-seryl-tRNA(Sec), which will be further converted into selenocysteinyl-tRNA(Sec). The chain is Serine--tRNA ligase from Bacillus subtilis (strain 168).